The following is a 698-amino-acid chain: Elongation factor G 1 (698 aa).

The region spanning 8-290 (ERYRNIGIVA…AVVDYLPAPI (283 aa)) is the tr-type G domain. Residues 17–24 (AHVDAGKT), 88–92 (DTPGH), and 142–145 (NKMD) contribute to the GTP site.

The protein belongs to the TRAFAC class translation factor GTPase superfamily. Classic translation factor GTPase family. EF-G/EF-2 subfamily.

The protein resides in the cytoplasm. Its function is as follows. Catalyzes the GTP-dependent ribosomal translocation step during translation elongation. During this step, the ribosome changes from the pre-translocational (PRE) to the post-translocational (POST) state as the newly formed A-site-bound peptidyl-tRNA and P-site-bound deacylated tRNA move to the P and E sites, respectively. Catalyzes the coordinated movement of the two tRNA molecules, the mRNA and conformational changes in the ribosome. The chain is Elongation factor G 1 from Shewanella denitrificans (strain OS217 / ATCC BAA-1090 / DSM 15013).